A 106-amino-acid chain; its full sequence is Thiosulfate sulfurtransferase GlpE (106 aa).

A Rhodanese domain is found at glutamate 17–arginine 105. Cysteine 65 functions as the Cysteine persulfide intermediate in the catalytic mechanism.

It belongs to the GlpE family.

The protein resides in the cytoplasm. The catalysed reaction is thiosulfate + hydrogen cyanide = thiocyanate + sulfite + 2 H(+). It catalyses the reaction thiosulfate + [thioredoxin]-dithiol = [thioredoxin]-disulfide + hydrogen sulfide + sulfite + 2 H(+). Functionally, transferase that catalyzes the transfer of sulfur from thiosulfate to thiophilic acceptors such as cyanide or dithiols. May function in a CysM-independent thiosulfate assimilation pathway by catalyzing the conversion of thiosulfate to sulfite, which can then be used for L-cysteine biosynthesis. The sequence is that of Thiosulfate sulfurtransferase GlpE from Vibrio parahaemolyticus serotype O3:K6 (strain RIMD 2210633).